A 255-amino-acid chain; its full sequence is MYKVDLNCDLGESFGSYKLGLDEEVISYISSANIACGFHAADPLVMDYTVKLAKAAGVSVGAHPGFPDLVGFGRRNMNVSPKEAKAMVQYQIGALDSFCRAQGIKMQHVKPHGALYNMAGKDLKLAEAICEGIYEVNPELILLALSGSEMINAAQNIGLKVAREAFADRAYEEDGSLVARTKEGAMITDEEVAIKRVIKMIKENKVTSITGKDIPIKVDSICVHGDGAKALEFVKKIKLSLEEENIEIIPLHKIY.

It belongs to the LamB/PxpA family. As to quaternary structure, forms a complex composed of PxpA, PxpB and PxpC.

The enzyme catalyses 5-oxo-L-proline + ATP + 2 H2O = L-glutamate + ADP + phosphate + H(+). Functionally, catalyzes the cleavage of 5-oxoproline to form L-glutamate coupled to the hydrolysis of ATP to ADP and inorganic phosphate. The polypeptide is 5-oxoprolinase subunit A (Clostridium beijerinckii (strain ATCC 51743 / NCIMB 8052) (Clostridium acetobutylicum)).